The primary structure comprises 234 residues: Sugar fermentation stimulation protein homolog (234 aa).

This sequence belongs to the SfsA family.

The sequence is that of Sugar fermentation stimulation protein homolog from Shewanella piezotolerans (strain WP3 / JCM 13877).